We begin with the raw amino-acid sequence, 110 residues long: Large ribosomal subunit protein P1 (110 aa).

Position 2 is a blocked amino end (Ala) (alanine 2). Residues 69–83 show a composition bias toward low complexity; it reads AAPAAGGAAAATEAP. The interval 69 to 110 is disordered; the sequence is AAPAAGGAAAATEAPAAKEEKKEEKKEESEEEDEDMGFGLFD. Over residues 84–96 the composition is skewed to basic and acidic residues; it reads AAKEEKKEEKKEE. Phosphoserine; in form eL12'-P is present on serine 97.

Part of the ribosomal stalk of the large ribosomal subunit; P1 and P2 exist as dimers which assemble on the P0 scaffold. Post-translationally, phosphorylation of Ser-97 converts eL12' to eL12'-P.

In terms of biological role, plays an important role in the elongation step of protein synthesis. The chain is Large ribosomal subunit protein P1 from Artemia salina (Brine shrimp).